The following is an 894-amino-acid chain: Bifunctional glutamine synthetase adenylyltransferase/adenylyl-removing enzyme (894 aa).

Residues 1–410 (MPANTSAAIA…HFEQVFILPS (410 aa)) form an adenylyl removase region. The interval 415 to 894 (SHPLSELWLD…QVFEQALDFS (480 aa)) is adenylyl transferase.

It belongs to the GlnE family. The cofactor is Mg(2+).

The enzyme catalyses [glutamine synthetase]-O(4)-(5'-adenylyl)-L-tyrosine + phosphate = [glutamine synthetase]-L-tyrosine + ADP. It carries out the reaction [glutamine synthetase]-L-tyrosine + ATP = [glutamine synthetase]-O(4)-(5'-adenylyl)-L-tyrosine + diphosphate. Its function is as follows. Involved in the regulation of glutamine synthetase GlnA, a key enzyme in the process to assimilate ammonia. When cellular nitrogen levels are high, the C-terminal adenylyl transferase (AT) inactivates GlnA by covalent transfer of an adenylyl group from ATP to specific tyrosine residue of GlnA, thus reducing its activity. Conversely, when nitrogen levels are low, the N-terminal adenylyl removase (AR) activates GlnA by removing the adenylyl group by phosphorolysis, increasing its activity. The regulatory region of GlnE binds the signal transduction protein PII (GlnB) which indicates the nitrogen status of the cell. This Chromobacterium violaceum (strain ATCC 12472 / DSM 30191 / JCM 1249 / CCUG 213 / NBRC 12614 / NCIMB 9131 / NCTC 9757 / MK) protein is Bifunctional glutamine synthetase adenylyltransferase/adenylyl-removing enzyme.